The primary structure comprises 818 residues: Dipeptidyl aminopeptidase B (818 aa).

The Cytoplasmic portion of the chain corresponds to 1–29 (MEGGEEEVERIPDELFDTKKKHLLDKLIR). Residues 30–45 (VGIILVLLIWGTVLLL) traverse the membrane as a helical; Signal-anchor for type II membrane protein segment. The Lumenal portion of the chain corresponds to 46–818 (KSIPHHSNTP…KRAFDGQFVK (773 aa)). Residues N63, N79, N110, N139, N372, N392, and N421 are each glycosylated (N-linked (GlcNAc...) asparagine). S679 serves as the catalytic Charge relay system. An N-linked (GlcNAc...) asparagine glycan is attached at N738. Residues D756 and H789 each act as charge relay system in the active site.

It belongs to the peptidase S9B family.

The protein localises to the vacuole membrane. The protein is Dipeptidyl aminopeptidase B (DAP2) of Saccharomyces cerevisiae (strain ATCC 204508 / S288c) (Baker's yeast).